Reading from the N-terminus, the 147-residue chain is Small ribosomal subunit protein uS12 (147 aa).

The protein belongs to the universal ribosomal protein uS12 family. As to quaternary structure, part of the 30S ribosomal subunit.

In terms of biological role, with S4 and S5 plays an important role in translational accuracy. Located at the interface of the 30S and 50S subunits. This is Small ribosomal subunit protein uS12 from Thermococcus kodakarensis (strain ATCC BAA-918 / JCM 12380 / KOD1) (Pyrococcus kodakaraensis (strain KOD1)).